The chain runs to 504 residues: Cytochrome P450 6B2 (504 aa).

Cysteine 445 contributes to the heme binding site.

Belongs to the cytochrome P450 family. Requires heme as cofactor.

It is found in the endoplasmic reticulum membrane. It localises to the microsome membrane. The catalysed reaction is an organic molecule + reduced [NADPH--hemoprotein reductase] + O2 = an alcohol + oxidized [NADPH--hemoprotein reductase] + H2O + H(+). The chain is Cytochrome P450 6B2 (CYP6B2) from Helicoverpa armigera (Cotton bollworm).